A 424-amino-acid polypeptide reads, in one-letter code: Enolase (424 aa).

Gln-163 contributes to the (2R)-2-phosphoglycerate binding site. Residue Glu-204 is the Proton donor of the active site. Residues Asp-241, Glu-284, and Asp-311 each coordinate Mg(2+). (2R)-2-phosphoglycerate is bound by residues Lys-336, Arg-365, Ser-366, and Lys-387. Lys-336 functions as the Proton acceptor in the catalytic mechanism.

Belongs to the enolase family. Mg(2+) serves as cofactor.

The protein resides in the cytoplasm. The protein localises to the secreted. It is found in the cell surface. It catalyses the reaction (2R)-2-phosphoglycerate = phosphoenolpyruvate + H2O. Its pathway is carbohydrate degradation; glycolysis; pyruvate from D-glyceraldehyde 3-phosphate: step 4/5. Its function is as follows. Catalyzes the reversible conversion of 2-phosphoglycerate (2-PG) into phosphoenolpyruvate (PEP). It is essential for the degradation of carbohydrates via glycolysis. The sequence is that of Enolase from Dictyoglomus thermophilum (strain ATCC 35947 / DSM 3960 / H-6-12).